Consider the following 824-residue polypeptide: AMP deaminase 2 (824 aa).

A disordered region spans residues 1 to 43 (MASYPGPGKSKAKYPFKKRASLQASAAAPEARSGLGASPLQSA). The segment covering 10-20 (SKAKYPFKKRA) has biased composition (basic residues). A Phosphoserine modification is found at Ser-21. Over residues 21–33 (SLQASAAAPEARS) the composition is skewed to low complexity. Arg-44 is subject to Omega-N-methylarginine. 3 positions are modified to phosphoserine: Ser-45, Ser-63, and Ser-79. Tyr-90 carries the phosphotyrosine modification. 2 positions are modified to phosphoserine: Ser-96 and Ser-113. A Phosphothreonine modification is found at Thr-133. Phosphoserine is present on residues Ser-135 and Ser-137. Zn(2+) is bound by residues His-364 and His-366. Residues His-366 and 435 to 440 (KFNAKY) contribute to the substrate site. Position 633 (His-633) interacts with Zn(2+). Glu-636 provides a ligand contact to substrate. His-655 functions as the Proton acceptor in the catalytic mechanism. Zn(2+) is bound at residue Asp-710. 711–714 (DPLQ) contributes to the substrate binding site.

It belongs to the metallo-dependent hydrolases superfamily. Adenosine and AMP deaminases family. Homotetramer. Zn(2+) serves as cofactor.

It carries out the reaction AMP + H2O + H(+) = IMP + NH4(+). Its pathway is purine metabolism; IMP biosynthesis via salvage pathway; IMP from AMP: step 1/1. Its function is as follows. AMP deaminase plays a critical role in energy metabolism. Catalyzes the deamination of AMP to IMP and plays an important role in the purine nucleotide cycle. In Rattus norvegicus (Rat), this protein is AMP deaminase 2.